A 687-amino-acid polypeptide reads, in one-letter code: Dentin sialophosphoprotein (687 aa).

A signal peptide spans 1 to 17 (MKTKIIIYICIWATAWA). Residues 54 to 113 (NNATNDDSPKGSELGRQVHSNGGYERDRNGSESIAVGGKSSPTQPILANAQGNSAKERED) form a disordered region. Asn-55 carries N-linked (GlcNAc...) asparagine glycosylation. At Thr-57 the chain carries Phosphothreonine; by CK2. Asn-82 carries N-linked (GlcNAc...) asparagine glycosylation. Polar residues predominate over residues 93 to 107 (SSPTQPILANAQGNS). Residue Asn-128 is glycosylated (N-linked (GlcNAc...) asparagine). Over residues 146–160 (EAKESKVHGQPHQDT) the composition is skewed to basic and acidic residues. The segment at 146 to 687 (EAKESKVHGQ…SDSNHSTSDD (542 aa)) is disordered. Residues 161-194 (KTGLASDTSQNGDATLVQENEPQVAGSKNSTNHE) show a composition bias toward polar residues. Asn-189 is a glycosylation site (N-linked (GlcNAc...) asparagine). Ser-226 carries the post-translational modification Phosphoserine; by CK2. Ser-253 carries the post-translational modification Phosphoserine; by CK1. Positions 262 to 275 (GDGRESHDGTEGHE) are enriched in basic and acidic residues. Positions 276 to 292 (GQSSGGNNDNRGQGSVS) are enriched in polar residues. Ser-278 bears the Phosphoserine; by CK1 mark. Residue Ser-292 is modified to Phosphoserine; by CK2. Ser-298 bears the Phosphoserine; by CK1 mark. N-linked (GlcNAc...) asparagine glycosylation occurs at Asn-312. Ser-315 is modified (phosphoserine; by CK2). Residues Thr-319 and Thr-329 each carry the phosphothreonine; by CK2 modification. Residues Ser-337 and Ser-345 each carry the phosphoserine; by CK2 modification. The span at 352–375 (SGQSQNQGLETEGSSTGNKSSITK) shows a compositional bias: polar residues. Ser-366 is modified (phosphoserine; by CK1). N-linked (GlcNAc...) asparagine glycosylation is present at Asn-369. A compositionally biased stretch (basic and acidic residues) spans 386–417 (SNGHHGMELDKRNSPKQGESDKPQGAAEKSDT). The span at 418–432 (HNNMGHSRIGSSSNS) shows a compositional bias: polar residues. Residues 447–460 (GDDPNSSDESNGSD) show a composition bias toward low complexity. The span at 500 to 521 (DDSSDDTSDTDDSDSNGDDDSE) shows a compositional bias: acidic residues. Residues 522–545 (SKDKDESDNSNHDNDSDSESKSDS) are compositionally biased toward basic and acidic residues. Residues 555–598 (SSDSSDSSDSSETSDSSDSSDTSDSSDSSDSSDSSNSSDTSDSS) are compositionally biased toward low complexity. The span at 599–617 (DSSDGDSSDGDSSDSDSSD) shows a compositional bias: acidic residues. Residues 618–639 (SDSSNSSDSDSSDSSDSSSSDS) show a composition bias toward low complexity. A compositionally biased stretch (acidic residues) spans 667 to 677 (SDSDSDSDSEG). Positions 678 to 687 (SDSNHSTSDD) are enriched in low complexity.

As to quaternary structure, interacts with FBLN7. In terms of processing, DSP is glycosylated. In terms of tissue distribution, specifically expressed in teeth, mainly in odontoblasts and transiently in pre-ameloblasts.

It is found in the secreted. The protein resides in the extracellular space. It localises to the extracellular matrix. Its function is as follows. DSP may be an important factor in dentinogenesis. DPP may bind high amount of calcium and facilitate initial mineralization of dentin matrix collagen as well as regulate the size and shape of the crystals. This is Dentin sialophosphoprotein (Dspp) from Rattus norvegicus (Rat).